A 272-amino-acid chain; its full sequence is uncharacterized protein (272 aa).

This sequence belongs to the sodium:galactoside symporter (TC 2.A.2) family.

This is an uncharacterized protein from Pseudescherichia vulneris (Escherichia vulneris).